A 740-amino-acid polypeptide reads, in one-letter code: Gramillins biosynthetic cluster protein FGSG_11657 (740 aa).

Disordered stretches follow at residues 353–391, 414–434, 514–535, and 656–686; these read QADS…SSIP, SKLS…DAAS, PKEQ…GSSD, and EHEG…PQGD. Over residues 656-667 the composition is skewed to basic and acidic residues; that stretch reads EHEGEGRADTNR. The segment covering 668-682 has biased composition (polar residues); it reads HVSTQSNMPTEQSLL.

Its pathway is mycotoxin biosynthesis. Functionally, part of the gene cluster that mediates the biosynthesis of gramillins A and B, bicyclic lipopeptides that induce cell death in maize leaves but not in wheat leaves. The nonribosomal peptide synthetase GRA1 incorporates respectively a glutamic adic (Glu), a leucine (Leu), a serine (Ser), a hydroxyglutamine (HOGln), a 2-amino decanoic acid, and 2 cysteins (CysB and CysA). The biosynthesis of 2-amino decanoic acid incorporated in gramillins could be initiated by a fatty acid synthase composed of the alpha and beta subunits FGSG_00036 and FGSG_11656. The cytochrome P450 monooxygenase FGSG_15680 could hydroxylate the fatty acid chain. Subsequent oxidation to the ketone by the oxidoreductase FGSG_00048 and transamination by aminotransferase FGSG_00049 could form 2-amino-decanoic acid. On the other hand, FGSG_15680 could also be responsible for the HO-modified glutamine at the gamma-position. Whether hydroxylation occurs on the fully assembled product or on the Gln residue prior to assembly into the gramillins requires further proof. The thioredoxin FGSG_00043 could also be required for the disulfide-bond formation between CysA and CysB. The specific involvement of the remaining proteins from the cluster is more difficult to discern, but could have broader regulatory (FGSG_00040 and FGSG_11657) or enzymatic functions (FGSG_00044 and FGSG_00045). The final C-domain of GRA1 does not possess the expected sequence of a termination CT domain, often implicated in macrocyclization and release of a cyclopeptidein fungal NRPs; and the thioesterase FGSG_00047 may act in concert with the terminal C-domain of GRA1 to catalyze the formation of the macrocyclic anhydride and release of the products. The polypeptide is Gramillins biosynthetic cluster protein FGSG_11657 (Gibberella zeae (strain ATCC MYA-4620 / CBS 123657 / FGSC 9075 / NRRL 31084 / PH-1) (Wheat head blight fungus)).